Here is a 546-residue protein sequence, read N- to C-terminus: Zinc finger and BTB domain-containing protein 7A (546 aa).

The 68-residue stretch at 34–101 (CDVVILVEGQ…AYTATLTVST (68 aa)) folds into the BTB domain. Residues 189–288 (QEDEEEPDCN…SFVPTGAEAE (100 aa)) are disordered. C2H2-type zinc fingers lie at residues 359–381 (QKCP…IRTH), 387–409 (YECN…MRKH), and 415–437 (YLCQ…MRVH). The segment at 443-467 (YQCDSCFKTFVRSDHLHRHLKKDGC) adopts a C2H2-type 4; atypical zinc-finger fold. Positions 463-546 (KKDGCNGIPS…AAEGSAPGPS (84 aa)) are disordered. Residues 534–546 (AGGAAEGSAPGPS) show a composition bias toward low complexity.

Its subcellular location is the nucleus. Its function is as follows. Transcription factor that represses the transcription of a wide range of genes involved in cell proliferation and differentiation. Directly and specifically binds to the consensus sequence 5'-[GA][CA]GACCCCCCCCC-3' and represses transcription both by regulating the organization of chromatin and through the direct recruitment of transcription factors to gene regulatory regions. May also play a role, independently of its transcriptional activity, in double-strand break repair via classical non-homologous end joining/cNHEJ and in alternative splicing. The sequence is that of Zinc finger and BTB domain-containing protein 7A from Gallus gallus (Chicken).